We begin with the raw amino-acid sequence, 721 residues long: ATP-dependent zinc metalloprotease FtsH (721 aa).

The Cytoplasmic segment spans residues 1–44; sequence MYFLKKIVNLFSSKIESEDNNVKKDDLTQPRKQSPEARKRRNRR. A helical transmembrane segment spans residues 45–65; it reads IIFWLIILLIIGTIIGVIIYF. Topologically, residues 66-190 are extracellular; sequence SVRKEYDNVI…AGIPSSGFNP (125 aa). The helical transmembrane segment at 191-211 threads the bilayer; the sequence is QVIISPLISIIFFIIFLYIIL. Topologically, residues 212–721 are cytoplasmic; the sequence is RVSKAQSDSL…KDKEKDQKSN (510 aa). 279-286 lines the ATP pocket; the sequence is GPPGTGKT. Zn(2+) is bound at residue H498. E499 is a catalytic residue. 2 residues coordinate Zn(2+): H502 and D577. Residues 686-721 are disordered; the sequence is NKREASQKQANSSVEEAKVVDDEESIKDKEKDQKSN. Basic and acidic residues predominate over residues 700 to 721; sequence EEAKVVDDEESIKDKEKDQKSN.

It in the central section; belongs to the AAA ATPase family. In the C-terminal section; belongs to the peptidase M41 family. As to quaternary structure, homohexamer. It depends on Zn(2+) as a cofactor.

Its subcellular location is the cell membrane. Its function is as follows. Acts as a processive, ATP-dependent zinc metallopeptidase for both cytoplasmic and membrane proteins. Plays a role in the quality control of integral membrane proteins. The protein is ATP-dependent zinc metalloprotease FtsH of Ureaplasma parvum serovar 3 (strain ATCC 27815 / 27 / NCTC 11736).